We begin with the raw amino-acid sequence, 356 residues long: Heparan sulfate 2-O-sulfotransferase 1 (356 aa).

Residues 1 to 11 are Cytoplasmic-facing; it reads MGLLRIMMPPK. Residues 12–28 form a helical; Signal-anchor for type II membrane protein membrane-spanning segment; it reads LQLLAVVAFAVAMLFLE. Residues 24–51 are a coiled coil; sequence MLFLENQIQKLEESRSKLERAIARHEVR. Residues 29-356 are Lumenal-facing; it reads NQIQKLEESR…FYEKIYPKSN (328 aa). Residues Lys-83, Thr-84, Ala-85, Ser-86, Thr-87, and Ser-88 each contribute to the adenosine 3',5'-bisphosphate site. N-linked (GlcNAc...) asparagine glycans are attached at residues Asn-108 and Asn-127. Active-site residues include His-140 and His-142. Positions 164 and 172 each coordinate adenosine 3',5'-bisphosphate. Intrachain disulfides connect Cys-201-Cys-209 and Cys-222-Cys-228. Residues Tyr-279, Ser-285, Thr-290, and Lys-293 each coordinate adenosine 3',5'-bisphosphate.

The protein belongs to the sulfotransferase 3 family. As to quaternary structure, homotrimer. Interacts with the C5-epimerase GLCE. N-glycosylated.

It localises to the golgi apparatus membrane. Functionally, catalyzes the transfer of a sulfo group from 3'-phospho-5'-adenylyl sulfate (PAPS) to the 2-OH position of iduronic acid (IdoA) or glucuronic acid (GlcA) within the heparan sulfate (HS) chain and participates in HS biosynthesis. Required for metanephric development of kidney formation, suggesting that 2-O-sulfation within HS is essential for signaling between ureteric bud and metanephric mesenchyme. The polypeptide is Heparan sulfate 2-O-sulfotransferase 1 (Pongo abelii (Sumatran orangutan)).